The following is a 512-amino-acid chain: Retinaldehyde dehydrogenase 3 (512 aa).

Residues 1-22 (MATTNGAVENGQPDGKPPALPR) are disordered. Ala2 is modified (N-acetylalanine). NAD(+) is bound by residues Lys204, Glu207, and 257–262 (GSTEVG). Glu280 serves as the catalytic Proton acceptor. Cys314 serves as the catalytic Nucleophile. Gln361 and Glu411 together coordinate NAD(+).

It belongs to the aldehyde dehydrogenase family. As to quaternary structure, homotetramer. Detected in embryonic head (at protein level). Ventral retina.

It is found in the cytoplasm. The enzyme catalyses retinal + NAD(+) + H2O = retinoate + NADH + 2 H(+). It catalyses the reaction all-trans-retinal + NAD(+) + H2O = all-trans-retinoate + NADH + 2 H(+). It carries out the reaction all-trans-13,14-dihydroretinal + NAD(+) + H2O = all-trans-13,14-dihydroretinoate + NADH + 2 H(+). The protein operates within cofactor metabolism; retinol metabolism. Catalyzes the NAD-dependent oxidation of aldehyde substrates, such as all-trans-retinal and all-trans-13,14-dihydroretinal, to their corresponding carboxylic acids, all-trans-retinoate and all-trans-13,14-dihydroretinoate, respectively. High specificity for all-trans-retinal as substrate, can also accept acetaldehyde as substrate in vitro but with lower affinity. Required for the biosynthesis of normal levels of retinoate in the embryonic ocular and nasal regions; a critical lipid in the embryonic development of the eye and the nasal region. This is Retinaldehyde dehydrogenase 3 (Aldh1a3) from Mus musculus (Mouse).